Consider the following 174-residue polypeptide: Adipose-secreted signaling protein (174 aa).

Belongs to the ADISSP family.

Its subcellular location is the secreted. In terms of biological role, may be involved in thermogenesis and glucose homeostasis. In Xenopus tropicalis (Western clawed frog), this protein is Adipose-secreted signaling protein.